A 215-amino-acid chain; its full sequence is 23.2 kDa heat shock protein (215 aa).

Residues Met-1–Gly-27 form the signal peptide. The sHSP domain maps to Asp-69–Ala-189. A disordered region spans residues Val-183 to Leu-215. Residues Gly-205 to Leu-215 show a composition bias toward polar residues.

The protein belongs to the small heat shock protein (HSP20) family. May form oligomeric structures.

Its subcellular location is the endoplasmic reticulum. The sequence is that of 23.2 kDa heat shock protein (HSP23.2) from Oryza sativa subsp. japonica (Rice).